We begin with the raw amino-acid sequence, 210 residues long: ATP-dependent dethiobiotin synthetase BioD (210 aa).

13-18 (GIGKTV) contacts ATP. Thr17 serves as a coordination point for Mg(2+). Lys33 is a catalytic residue. Glu101 contributes to the Mg(2+) binding site. ATP contacts are provided by residues 101-104 (EGAG) and 185-187 (PWL).

It belongs to the dethiobiotin synthetase family. Homodimer. Requires Mg(2+) as cofactor.

It is found in the cytoplasm. It catalyses the reaction (7R,8S)-7,8-diammoniononanoate + CO2 + ATP = (4R,5S)-dethiobiotin + ADP + phosphate + 3 H(+). It functions in the pathway cofactor biosynthesis; biotin biosynthesis; biotin from 7,8-diaminononanoate: step 1/2. Catalyzes a mechanistically unusual reaction, the ATP-dependent insertion of CO2 between the N7 and N8 nitrogen atoms of 7,8-diaminopelargonic acid (DAPA, also called 7,8-diammoniononanoate) to form a ureido ring. The protein is ATP-dependent dethiobiotin synthetase BioD of Bradyrhizobium sp. (strain BTAi1 / ATCC BAA-1182).